The chain runs to 52 residues: Eukaryotic translation initiation factor 5A (52 aa).

A Hypusine modification is found at lysine 42.

Belongs to the eIF-5A family. In terms of processing, lys-42 undergoes hypusination, a unique post-translational modification that consists in the addition of a butylamino group from spermidine to lysine side chain, leading to the formation of the unusual amino acid hypusine. eIF-5As are the only known proteins to undergo this modification, which is essential for their function.

It is found in the cytoplasm. Its function is as follows. Translation factor that promotes translation elongation and termination, particularly upon ribosome stalling at specific amino acid sequence contexts. Binds between the exit (E) and peptidyl (P) site of the ribosome and promotes rescue of stalled ribosome: specifically required for efficient translation of polyproline-containing peptides as well as other motifs that stall the ribosome. Acts as a ribosome quality control (RQC) cofactor by joining the RQC complex to facilitate peptidyl transfer during CAT tailing step. This chain is Eukaryotic translation initiation factor 5A, found in Schistosoma mansoni (Blood fluke).